The primary structure comprises 101 residues: Protein PIP-1 (101 aa).

Residues 1–23 (MGKCLLLPLLLVVLSSLLGFPQA) form the signal peptide. A UPAR/Ly6 domain is found at 24 to 101 (LECFQCQRVS…CHDSPFCNKF (78 aa)). 5 cysteine pairs are disulfide-bonded: Cys26/Cys53, Cys29/Cys38, Cys45/Cys71, Cys75/Cys91, and Cys92/Cys98. The N-linked (GlcNAc...) asparagine glycan is linked to Asn84.

Its subcellular location is the secreted. The protein is Protein PIP-1 of Sus scrofa (Pig).